We begin with the raw amino-acid sequence, 49 residues long: Photosystem II reaction center protein K (49 aa).

Positions 1 to 12 are excised as a propeptide; the sequence is MISSIHLRKLLG. A helical membrane pass occupies residues 24–44; it reads IIDVLPIIPVLFLLLAFVWQA.

The protein belongs to the PsbK family. As to quaternary structure, PSII is composed of 1 copy each of membrane proteins PsbA, PsbB, PsbC, PsbD, PsbE, PsbF, PsbH, PsbI, PsbJ, PsbK, PsbL, PsbM, PsbT, PsbX, PsbY, PsbZ, Psb30/Ycf12, at least 3 peripheral proteins of the oxygen-evolving complex and a large number of cofactors. It forms dimeric complexes.

The protein localises to the plastid. It localises to the chloroplast thylakoid membrane. Functionally, one of the components of the core complex of photosystem II (PSII). PSII is a light-driven water:plastoquinone oxidoreductase that uses light energy to abstract electrons from H(2)O, generating O(2) and a proton gradient subsequently used for ATP formation. It consists of a core antenna complex that captures photons, and an electron transfer chain that converts photonic excitation into a charge separation. In Phacus acuminatus, this protein is Photosystem II reaction center protein K.